A 194-amino-acid polypeptide reads, in one-letter code: Calcium channel flower (194 aa).

Residues 1–34 (MSFAEKITGLLARPNQQDPIGPEQPWYLKYGSRL) are Cytoplasmic-facing. A helical membrane pass occupies residues 35–55 (LGIVAAFFAILFGLWNVFSII). Residues 56 to 65 (TLSVSCLVAG) are Extracellular-facing. The chain crosses the membrane as a helical span at residues 66 to 88 (ILQMVAGFVVMLLEAPCCFVCFG). Residues 89 to 106 (QVNEIAEKVESKPLYFRA) lie on the Cytoplasmic side of the membrane. Residues 107 to 127 (GLYIAMAIPPIILCFGLASLF) form a helical membrane-spanning segment. Over 128 to 194 (GSGLIFGTGV…TGAVGTDSNV (67 aa)) the chain is Extracellular. Important for promoting apoptosis regions lie at residues 135 to 157 (TGVV…RAAA) and 135 to 192 (TGVV…GTDS).

It belongs to the calcium channel flower family. Associates with the dally/ magu complex. As to quaternary structure, homomultimer. Associates with the dally/ magu complex. As to expression, detected in the imaginal wing disk (at protein level). Detected throughout the adult brain, including the optic lobe but, at much lower levels of expression than isoform Lose-A. In terms of tissue distribution, detected in the optic lobe (at protein level). Detected throughout the adult brain, including the optic lobe. Expressed in damaged and undamaged optic lobe neurons. As to expression, expressed in optic lobe neurons, with higher levels of expression in suboptimal neurons. Specifically expressed in injury-damaged optic lobe neurons.

The protein localises to the cell membrane. The protein resides in the cytoplasmic vesicle. It is found in the secretory vesicle. It localises to the synaptic vesicle membrane. Its subcellular location is the presynaptic cell membrane. The protein localises to the endosome. The protein resides in the synaptic vesicle. With respect to regulation, channel activity is inhibited by La(3+), which reduces Ca(2+) influx and thus inhibits it's function in promoting activity-dependent bulk endocytosis (ADBE) in response to high stimuli. Functionally, transmembrane protein which mediates synaptic endocytosis, fitness-based cell culling, neuronal culling, morphogen gradient scaling, and calcium transport. Regulates synaptic endocytosis and hence couples exo- with endocytosis. Controls two major modes of synaptic vesicle (SV) endocytosis in the synaptic boutons of neuromuscular junctions (NMJs); Ca(2+) channel-independent Clathrin-mediated endocytosis (CME) in response to mild stimulation, and Ca(2+) channel-dependent activity-dependent bulk endocytosis (ADBE) in response to strong stimulation. Functions in ADBE and subsequent SV reformation from bulk endosomes by initiating Ca(2+) channel-dependent phosphatidylinositol 4,5-bisphosphate (PtdIns(4,5)P2) compartmentalization in synaptic boutons. There it acts at the periactive zone to provide the low Ca(2+) levels required to initiate Calcineurin activation and upregulate PtdIns(4,5)P2. Conversely PtdIns(4,5)P2 enhances fwe Ca(2+) channel-activity, establishing a positive feedback loop that induces PtdIns(4,5)P2 microdomain at the periactive zone. These microdomains trigger bulk membrane invagination (i.e. ADBE) by triggering actin polymerization while also promoting localization of fwe to bulk endosomes, thereby removing the ADBE trigger to reduce endocytosis and prevent excess membrane uptake. PtdIns(4,5)P2 then promotes SV reformation from the bulk endosomes, to coordinate ADBE and subsequent SV reformation. Different combinations of the flower isoforms at the cell membrane are also required for the identification and elimination of suboptimal or supernumerary cells during development, regeneration, and adulthood. Required for the recognition and elimination of unfit cells in the developing wing during cell competition. Also required for efficient identification and elimination of injured, damaged and/or dysfunctional neurons during regeneration of the adult brain. In the developing pupal retina, mediates the elimination of unwanted postmitotic neurons, including supernumerary photoreceptor neurons that form at the periphery of the retina and are contained within incomplete ommatidia units. Downstream of the flower fitness fingerprints, cells identified as unwanted or unfit are eliminated via apoptosis through the expression of ahuizotl (azot). However, the cells marked for elimination by the flower isoforms only undergo apoptosis if additional thresholds are met; (1) their neighboring fit/healthy cells express different levels of the fwe isoforms, and (2) the levels of the protective signal SPARC expressed by the loser or unwanted cells are unable to inhibit caspase activation. These additional thresholds for flower-mediated apoptosis, allows useful cells to recover from transient and limited stress before they are unnecessarily eliminated. Functions with dally and magu in a mechanism of scaling, which utilises apoptosis to ensure that the dpp morphogen gradient, which mediates organ growth, remains proportional to the size of the growing wing. In this mechanism, fwe represses dally- and Magu-dependent activity in expanding the gradient, and dally/Magu inhibits fwe-dependent apoptosis to keep cell death rate low. When the levels of these different proteins are optimally regulated the gradient correctly scales with organ growth but when this fails, fwe-mediated apoptosis is activated to trim the developing tissue to match the correct size of the gradient. Its function is as follows. Functions with the other flower isoforms to produce tissue-specific fitness fingerprints that identify unfit or fit cells during cell selection processes in order to maintain tissue health. In the wing imaginal disk, this isoform is highly expressed in healthy/normal cells but is down-regulated in cells with decreased fitness. During cell competition, if levels of this isoform in unfit cells is lower than in the surrounding neighboring cells, the suboptimal cells are recognized as 'loser' cells, and undergo elimination via apoptosis to be replaced by the surrounding healthy 'winner' cell population. Functions with the other flower isoforms to produce tissue-specific fitness fingerprints that identify unfit or fit cells during cell selection processes in order to maintain tissue health. In the wing imaginal disk, this isoform displays low levels of expression in healthy/normal cells but is up-regulated in cells with decreased fitness. During cell competition, if levels of this isoform in unfit cells is higher than in the surrounding neighboring cells, the suboptimal cells are recognized as 'loser' cells, and undergo elimination via apoptosis to be replaced by the surrounding healthy 'winner' cell population. In terms of biological role, functions with the other flower isoforms to produce tissue-specific fitness fingerprints that identify unfit cells for cell selection processes during development, regeneration, and to maintain tissue health. During cell competition in certain tissues, marks suboptimal or damaged cells as 'loser' cells. In cells of the wing imaginal disk and damaged or dysfunctional neurons in the adult optic lobe, this isoform displays low to no expression in healthy/normal cells but is up-regulated in cells with decreased fitness or damage-affected neurons. During cell competition, if levels of this isoform in unfit cells is higher than in the surrounding neighboring cells, the suboptimal cells are recognized as 'loser' cells, and undergo elimination via apoptosis to be replaced by the surrounding healthy/undamaged 'winner' cell population. In the developing pupal retina, also required for the recognition and elimination of postmitotic neurons, including supernumerary photoreceptor neurons that form at the periphery of the retina and are contained within incomplete ommatidia units. Activity at the peripheral retina is induced by the wg signaling pathway but, once activated, it promotes apoptosis of supernumerary photoreceptor neurons independently of wg signaling and snail function. The sequence is that of Calcium channel flower (fwe) from Drosophila melanogaster (Fruit fly).